The chain runs to 350 residues: Homoserine O-succinyltransferase (350 aa).

Cysteine 146 serves as the catalytic Acyl-thioester intermediate. Lysine 167 and serine 196 together coordinate substrate. Histidine 239 acts as the Proton acceptor in catalysis. The active site involves glutamate 241. Position 253 (arginine 253) interacts with substrate.

It belongs to the MetA family.

The protein resides in the cytoplasm. It catalyses the reaction L-homoserine + succinyl-CoA = O-succinyl-L-homoserine + CoA. It participates in amino-acid biosynthesis; L-methionine biosynthesis via de novo pathway; O-succinyl-L-homoserine from L-homoserine: step 1/1. Transfers a succinyl group from succinyl-CoA to L-homoserine, forming succinyl-L-homoserine. The protein is Homoserine O-succinyltransferase of Cardiobacterium hominis (strain ATCC 15826 / DSM 8339 / NCTC 10426 / 6573).